We begin with the raw amino-acid sequence, 120 residues long: Secreted effector PIT2 (120 aa).

An N-terminal signal peptide occupies residues 1–25 (MLFRSAFVLLIVAFASACLVQHVQA). Residues 46 to 59 (KLNRRWWFGFTGSL) are PID14 protease inhibitor domain.

Interacts with host cysteine proteases CP1A, CP1B, XCP2 and CP2. In terms of processing, cleaved by host target papain-like cysteine proteases (PLCPs) to release the embedded inhibitor peptide PID14.

It is found in the secreted. In terms of biological role, secreted effector required for virulence. Functions as an inhibitor of a set of apoplastic maize papain-like cysteine proteases (PLCPs) including CP1A, CP1B, XCP2 and CP2, whose activity is directly linked with salicylic-acid-associated plant defenses. Acts as a substrate mimicking molecule for apoplastic PLCPs and its processing releases the embedded inhibitor peptide PID14, which in turn blocks PLCPs to modulate host immunity. In Mycosarcoma maydis (Corn smut fungus), this protein is Secreted effector PIT2.